Consider the following 247-residue polypeptide: Small ribosomal subunit protein uS2 (247 aa).

It belongs to the universal ribosomal protein uS2 family.

This Pseudomonas syringae pv. tomato (strain ATCC BAA-871 / DC3000) protein is Small ribosomal subunit protein uS2.